A 446-amino-acid polypeptide reads, in one-letter code: Probable polyamine aminopropyl transferase (446 aa).

The tract at residues 1–117 (MVEPAIGRNH…KRIACVVSAV (117 aa)) is unknown. The tract at residues 64–94 (GRGAERWHRSPRQANGRFSNQRYSSTSPNSS) is disordered. Positions 75 to 94 (RQANGRFSNQRYSSTSPNSS) are enriched in polar residues. The PABS domain occupies 116 to 351 (AVIFVATSCV…ELFAKKPGSG (236 aa)). The interval 118-353 (IFVATSCVSP…FAKKPGSGSE (236 aa)) is spermidine synthase. Residues Asn-147, Glu-226, and 251–252 (DG) each bind S-methyl-5'-thioadenosine. The active-site Proton acceptor is Asp-269.

This sequence belongs to the spermidine/spermine synthase family. Homodimer or homotetramer.

The protein localises to the cytoplasm. It carries out the reaction S-adenosyl 3-(methylsulfanyl)propylamine + putrescine = S-methyl-5'-thioadenosine + spermidine + H(+). Its pathway is amine and polyamine biosynthesis; spermidine biosynthesis; spermidine from putrescine: step 1/1. In terms of biological role, catalyzes the irreversible transfer of a propylamine group from the amino donor S-adenosylmethioninamine (decarboxy-AdoMet) to putrescine (1,4-diaminobutane) to yield spermidine. In Bifidobacterium longum (strain NCC 2705), this protein is Probable polyamine aminopropyl transferase (speE).